The primary structure comprises 252 residues: Vitamin B12 import ATP-binding protein BtuD (252 aa).

Residues 2 to 237 enclose the ABC transporter domain; it reads IQIKSLSVGA…EQLESVFNTQ (236 aa). Residue 30 to 37 coordinates ATP; that stretch reads GPNGSGKS.

The protein belongs to the ABC transporter superfamily. Vitamin B12 importer (TC 3.A.1.13.1) family. The complex is composed of two ATP-binding proteins (BtuD), two transmembrane proteins (BtuC) and a solute-binding protein (BtuF).

The protein localises to the cell inner membrane. The catalysed reaction is an R-cob(III)alamin(out) + ATP + H2O = an R-cob(III)alamin(in) + ADP + phosphate + H(+). In terms of biological role, part of the ABC transporter complex BtuCDF involved in vitamin B12 import. Responsible for energy coupling to the transport system. This chain is Vitamin B12 import ATP-binding protein BtuD, found in Vibrio atlanticus (strain LGP32) (Vibrio splendidus (strain Mel32)).